The following is a 127-amino-acid chain: MRNAAIQHIEAKFLRQDVTVFNTGDSVRVHWKVKEGEKERVQAFEGIVIRKTKGNHRATFTVRKLSFGVGVERVFPLHSPRYEKIEVLSRGDVNRKRLFYLRALKGKAARVDVIEEPKPSKKAASAS.

It belongs to the bacterial ribosomal protein bL19 family.

In terms of biological role, this protein is located at the 30S-50S ribosomal subunit interface and may play a role in the structure and function of the aminoacyl-tRNA binding site. This is Large ribosomal subunit protein bL19 from Myxococcus xanthus (strain DK1622).